The chain runs to 276 residues: NH(3)-dependent NAD(+) synthetase (276 aa).

43-50 (GISGGVDS) lines the ATP pocket. Position 49 (aspartate 49) interacts with Mg(2+). Residue arginine 146 participates in deamido-NAD(+) binding. Threonine 166 lines the ATP pocket. A Mg(2+)-binding site is contributed by glutamate 171. Lysine 179 and aspartate 186 together coordinate deamido-NAD(+). ATP-binding residues include lysine 195 and threonine 217. A deamido-NAD(+)-binding site is contributed by 266–267 (HK).

It belongs to the NAD synthetase family. In terms of assembly, homodimer.

It carries out the reaction deamido-NAD(+) + NH4(+) + ATP = AMP + diphosphate + NAD(+) + H(+). It functions in the pathway cofactor biosynthesis; NAD(+) biosynthesis; NAD(+) from deamido-NAD(+) (ammonia route): step 1/1. Its function is as follows. Catalyzes the ATP-dependent amidation of deamido-NAD to form NAD. Uses ammonia as a nitrogen source. The chain is NH(3)-dependent NAD(+) synthetase from Vibrio vulnificus (strain YJ016).